The following is a 1172-amino-acid chain: Phytochrome B (1172 aa).

A compositionally biased stretch (gly residues) spans 1 to 16 (MVSGVGGSGGGRGGGR). Positions 1–54 (MVSGVGGSGGGRGGGRGGEEEPSSSHTPNNRRGGEQAQSSGTKSLRPRSNTESM) are disordered. The span at 24 to 54 (SSHTPNNRRGGEQAQSSGTKSLRPRSNTESM) shows a compositional bias: polar residues. Residues 252 to 433 (DIKLLCDTVV…AFGLQLNMEL (182 aa)) form the GAF domain. Cys-357 provides a ligand contact to phytochromobilin. PAS domains follow at residues 652 to 723 (VARE…LRGD) and 786 to 857 (DYKA…MIVL). The Histidine kinase domain occupies 934–1153 (YICQVIKNPL…LIILELPVPR (220 aa)).

It belongs to the phytochrome family. As to quaternary structure, homodimer. Interacts with ADO1 and PKS4. Stabilized by interactions with PAPP5 and FYPP3 which are enhanced in the phosphorylated Pfr form. Interacts with VOZ1 and VOZ2. Binds, via its photosensory domain, to PTAC12/HMR/PAP5 when photoactivated; this interaction stimulates its localization to photobodies. Interacts with CRY1 specifically when in the dark/far-red (Pr) state, but not when red light-activated (Pfr). Interacts with PIF4 and PIF5 in response to low blue light (LBL). Component of a red light-dependent nuclear complex made of PHL, PHYB and CO. Interacts directly with PHL. Binds to UNE10/PIF8 when red light-activated (Pfr). When light-activated, interacts with PCH1 and PCHL. Associated with DRT111/RSN2/SFPS, SMP2 and SWAP1 in nuclear photobodies upon response to red light (Pfr form). Post-translationally, contains one covalently linked phytochromobilin chromophore. In terms of tissue distribution, expressed in fruits, flowers, leaves, stems, seedlings and roots.

It is found in the cytoplasm. The protein resides in the nucleus. The protein localises to the nucleoplasm. Its subcellular location is the nucleus speckle. In terms of biological role, regulatory photoreceptor which exists in two forms that are reversibly interconvertible by light: the Pr form that absorbs maximally in the red region of the spectrum and the Pfr form that absorbs maximally in the far-red region. Photoconversion of Pr to Pfr induces an array of morphogenetic responses, whereas reconversion of Pfr to Pr cancels the induction of those responses. Pfr controls the expression of a number of nuclear genes including those encoding the small subunit of ribulose-bisphosphate carboxylase, chlorophyll A/B binding protein, protochlorophyllide reductase, rRNA, etc. It also controls the expression of its own gene(s) in a negative feedback fashion. Involved in the flowering time regulation. Involved in light-regulated circadian phase control that triggers stomatal aperture, stomatal conductance, and CO(2) assimilation. Implicated in red light perception, and, to a lower extent, in blue light signaling. Controls thermomorphogenesis in the daytime and regulates temperature responses by associating with the promoters of key target genes in a temperature-dependent manner and subsequently repressing their expression in a PIF4-dependent manner (temperature-responsive transcriptional regulator); this process requires PTAC12/HMR/PAP5 (transcriptional activator). Thermal timer that integrates temperature information over the course of the night. Detabilizes UNE10/PIF8 in red light. The polypeptide is Phytochrome B (Arabidopsis thaliana (Mouse-ear cress)).